A 222-amino-acid polypeptide reads, in one-letter code: MIRRINLSGNPNLGVYISVTDSVALIPQNTPEKFEGVLREALEVEVLKVSISGSSLNGALAVGNSNGFVVSNQAMDREIDALAAAGVEAVRIPERFTAVGNLVLANDNGAVASPLLSDDALQVIGDVLEVDVKVSTLAGLNIVGSMGAATNRGALLNPQASSEEIGIIEDTLGVEADVGTVNHGVTLIGACSVANSNGVLVGEETTGPELARIEEALGFLEG.

The protein belongs to the eIF-6 family.

Binds to the 50S ribosomal subunit and prevents its association with the 30S ribosomal subunit to form the 70S initiation complex. The polypeptide is Translation initiation factor 6 (Methanothermobacter thermautotrophicus (strain ATCC 29096 / DSM 1053 / JCM 10044 / NBRC 100330 / Delta H) (Methanobacterium thermoautotrophicum)).